A 1174-amino-acid chain; its full sequence is Male determiner protein Mdmd(Y) (1174 aa).

Basic and acidic residues predominate over residues 1-15 (MNATDAESRKPENKP). 3 disordered regions span residues 1–51 (MNAT…SGQR), 79–109 (RKDG…HPVE), and 136–259 (KQLS…LRRS). Residues 16–35 (SSESSSSGSTSGSSDGEVSS) are compositionally biased toward low complexity. The span at 36–47 (KTYFKNNKSKVL) shows a compositional bias: polar residues. Over residues 79–92 (RKDGSNEMLPKEDS) the composition is skewed to basic and acidic residues. Positions 138 to 153 (LSAYRSRSRSTRLSYS) are enriched in low complexity. Residues 167–180 (SRYKKSVLRNRRTS) are compositionally biased toward basic residues. The segment covering 183–200 (HGRDSSTTKRSVSRDKDN) has biased composition (basic and acidic residues). A compositionally biased stretch (basic residues) spans 201-223 (RLRRRIGSSRSHTRSHSRFRRSE). Residues 235–259 (RSQERRHERRRSMSSDYERIALRRS) are compositionally biased toward basic and acidic residues. One can recognise an MIF4G domain in the interval 348–531 (KKYIHGYINK…KVLFQVRRDG (184 aa)). The segment covering 597–608 (DSDGSFGSGSNS) has biased composition (low complexity). The disordered stretch occupies residues 597 to 616 (DSDGSFGSGSNSETALSDCD). One can recognise an MI domain in the interval 641-757 (ALRRTIYLTL…SWDVLDCIKL (117 aa)). Low complexity predominate over residues 840 to 857 (SAPSSSSSSSLSSELSAP). 2 disordered regions span residues 840–1045 (SAPS…SRTK) and 1089–1135 (KGGP…SREY). Basic residues-rich tracts occupy residues 869 to 886 (KKKH…KNPS) and 895 to 909 (IVGK…KTIK). Over residues 910–924 (RRTDKDNSSSKDNFL) the composition is skewed to basic and acidic residues. Residues 926-957 (SESSSNESISLDSLSSELFAPSSYSSSESSND) show a composition bias toward low complexity. Residues 963–1001 (KHKGKNKKMTKKKNPSNKREKTKKKLSKNKKAPNKNTKK) are compositionally biased toward basic residues. Over residues 1010 to 1020 (SSESSISESKS) the composition is skewed to low complexity. Residues 1034 to 1045 (RKKRVTSKSRTK) show a composition bias toward basic residues. A compositionally biased stretch (basic and acidic residues) spans 1089 to 1118 (KGGPNCRKDNYGNRQNHEISQRHDSEIKRR). A compositionally biased stretch (basic residues) spans 1119–1130 (REERKKRHHEKN).

The protein belongs to the CWC22 family. Component of the spliceosome C complex.

The protein localises to the nucleus speckle. Functionally, male determiner protein (M-factor) that controls male somatic sexual differentiation. Acts as a dominant factor that regulates the mRNA splicing of transformer (tra) and doublesex (dsx) transcripts and promotes expression of male splice forms of tra and dsx. Probably acts as a component of the spliceosome C complex required for mRNA splicing factor and exon-junction complex (EJC) assembly. Hinders eIF4AIII from non-specifically binding RNA and escorts it to the splicing machinery to promote EJC assembly on mature mRNAs. This chain is Male determiner protein Mdmd(Y), found in Musca domestica (House fly).